The following is a 343-amino-acid chain: MKVSIIGATGYGGLELIRLLHQHSSVDIATLHSFSAQSETLANFYPHLKGLEASPLEKINPAEIIEKSDTVFIATPSGIAKDVALPYIDAGLNVIDLSGDFRLKDNQLYEKWYGKKAAPEDYLAKAEYGLAEFRDNELATFIANPGCYATATLLGLAPLVKKQLIDPTSIIVDAKSGISGAGKVPSKSTHFTETNENMTLYKMNSHQHIPEIMQQLTKWDKSIPAIQFSTSLIPITRGIFTTIYVKPKNPITQQELHQLYESTYEHASFVRIQAENTYPTVKQVTASNYCDIGLAYNEKTNVITIVSVIDNLVKGAAGQAIQNLNIMANFAESDGLGFIPVYP.

Cys147 is a catalytic residue.

It belongs to the NAGSA dehydrogenase family. Type 1 subfamily.

The protein resides in the cytoplasm. It carries out the reaction N-acetyl-L-glutamate 5-semialdehyde + phosphate + NADP(+) = N-acetyl-L-glutamyl 5-phosphate + NADPH + H(+). The protein operates within amino-acid biosynthesis; L-arginine biosynthesis; N(2)-acetyl-L-ornithine from L-glutamate: step 3/4. In terms of biological role, catalyzes the NADPH-dependent reduction of N-acetyl-5-glutamyl phosphate to yield N-acetyl-L-glutamate 5-semialdehyde. The protein is N-acetyl-gamma-glutamyl-phosphate reductase of Listeria innocua serovar 6a (strain ATCC BAA-680 / CLIP 11262).